The sequence spans 583 residues: Phytoene desaturase (583 aa).

The N-terminal stretch at 1-20 (MAPPKHVIIIGAGAGGTATA) is a signal peptide. The chain crosses the membrane as a helical span at residues 531-551 (IIWFLLIALFAATLVLFIAFP).

It belongs to the carotenoid/retinoid oxidoreductase family. Requires NAD(+) as cofactor.

The protein localises to the membrane. It carries out the reaction 15-cis-phytoene + 5 A = all-trans-3,4-didehydrolycopene + 5 AH2. Its pathway is carotenoid biosynthesis; lycopene biosynthesis. In terms of biological role, phytoene desaturase involved in the carotenoid biosynthesis pathway. Converts phytoene into 3,4-didehydrolycopene via the intermediary of phytofluene, zeta-carotene, neurosporene and lycopene, by introducing up to five double bonds into phytoene. The sequence is that of Phytoene desaturase (carB) from Phycomyces blakesleeanus (strain ATCC 8743b / DSM 1359 / FGSC 10004 / NBRC 33097 / NRRL 1555).